Consider the following 925-residue polypeptide: Probable glycoprotein hormone G-protein coupled receptor (925 aa).

The N-terminal stretch at 1-27 (MEDRGICPRVLQVLFLVVLILISPVYA) is a signal peptide. Residues 28–529 (AKNDACTKCS…EDIMGYVWLT (502 aa)) lie on the Extracellular side of the membrane. N-linked (GlcNAc...) asparagine glycosylation occurs at Asn61. LRR repeat units lie at residues 85 to 106 (KLKYLTLNNNKIKNIAKFRVKN), 110 to 131 (SLITLSYTHNIIETIENGAFDD), 134 to 155 (QLTQLDLSNNRLKEFPIFNKTS), 156 to 180 (SVTKLYLRGNPGITKLPRQSLGNLP), 181 to 202 (SLENLFMERTGIQEIPAGIFRQ), 203 to 224 (NTRLINLYFNKTKALERINEDA), 230 to 250 (SLKTLVLDETSVTSLPSRGLK), and 251 to 273 (NLHFLSLKDVPNFWQLPELDSIR). Residue Asn152 is glycosylated (N-linked (GlcNAc...) asparagine). The N-linked (GlcNAc...) asparagine glycan is linked to Asn212. Positions 299 to 493 (TMQKPSTEEN…PTLIPHSNHT (195 aa)) are disordered. Positions 301-318 (QKPSTEENNGQTTASSPT) are enriched in polar residues. One copy of the 1; truncated repeat lies at 333–349 (STQPHTTSGFGGGGFPG). The interval 333 to 461 (STQPHTTSGF…PGGGGFPGGG (129 aa)) is 5 X approximate tandem repeats. A compositionally biased stretch (gly residues) spans 341–362 (GFGGGGFPGGGGGFPGGGGFPA). Tandem repeats lie at residues 350–384 (GGGGFPGGGGFPAGGSKTSTQPHTTSGFGGGGFPG), 385–419 (GGGGFPGGGGFPAGGSKTSTQPHTTSGFGGGGFPG), and 420–453 (GGGGFPGGGGFPGGSNTSTQPHTTSNSGGGGFPG). Positions 365–375 (SKTSTQPHTTS) are enriched in polar residues. Over residues 376 to 397 (GFGGGGFPGGGGGFPGGGGFPA) the composition is skewed to gly residues. Over residues 400–410 (SKTSTQPHTTS) the composition is skewed to polar residues. Residues 411-432 (GFGGGGFPGGGGGFPGGGGFPG) show a composition bias toward gly residues. Polar residues predominate over residues 434–445 (SNTSTQPHTTSN). An N-linked (GlcNAc...) asparagine glycan is attached at Asn435. Residues 446-462 (SGGGGFPGGGGFPGGGT) show a composition bias toward gly residues. The stretch at 454-461 (GGGFPGGG) is one 5; truncated repeat. Residues 476–493 (VHQSTADPPTLIPHSNHT) show a composition bias toward polar residues. Asn495 carries an N-linked (GlcNAc...) asparagine glycan. A helical membrane pass occupies residues 530-551 (VVSFMVGAVALVANLVVALVLL). At 552–561 (TSQRRLNVTR) the chain is on the cytoplasmic side. A helical membrane pass occupies residues 562 to 584 (FLMCNLAFADFILGLYIFILTSV). The Extracellular segment spans residues 585–606 (SAVTRGDYHNYVQQWQNGAGCK). Residues 607-628 (ILGFLAVFSSELSLFTLVMMTI) traverse the membrane as a helical segment. Over 629–651 (ERFYAIVHAMHMNARLSFRKTVR) the chain is Cytoplasmic. A helical membrane pass occupies residues 652–673 (FMIGGWIFALVMAVVPLTGVSG). Residues 674 to 691 (YSKVAICLPFDVSDATST) are Extracellular-facing. The chain crosses the membrane as a helical span at residues 692–712 (AYVAFLLLVNGASFISVMYLY). The Cytoplasmic portion of the chain corresponds to 713–739 (SRMLYVVVSGGDMEGAPKRNDSKVAKR). A helical membrane pass occupies residues 740 to 763 (MAILVFTDMLCWAPIAFFGLLAAF). Topologically, residues 764–774 (GQTLLTVTQSK) are extracellular. The chain crosses the membrane as a helical span at residues 775–795 (ILLVFFFPINSICNPFLYAFF). At 796 to 925 (TKAFKRELFT…QKQKILQSPS (130 aa)) the chain is on the cytoplasmic side. Positions 904 to 925 (VTKSSSPPHLKLQKQKILQSPS) are disordered.

This sequence belongs to the G-protein coupled receptor 1 family. FSH/LSH/TSH subfamily.

Its subcellular location is the cell membrane. In terms of biological role, probable receptor for a glycoprotein hormone. This is Probable glycoprotein hormone G-protein coupled receptor from Anthopleura elegantissima (Green aggregating anemone).